The following is a 171-amino-acid chain: Ribulose bisphosphate carboxylase small subunit, chloroplastic (171 aa).

The transit peptide at 1–50 (MATGAGAGAATVVSAFTGLKSTAQFPSSFKMSNAAAEWEQKTTSNGGRVR) directs the protein to the chloroplast.

It belongs to the RuBisCO small chain family. As to quaternary structure, heterohexadecamer of 8 large and 8 small subunits.

It localises to the plastid. The protein resides in the chloroplast. Functionally, ruBisCO catalyzes two reactions: the carboxylation of D-ribulose 1,5-bisphosphate, the primary event in carbon dioxide fixation, as well as the oxidative fragmentation of the pentose substrate. Both reactions occur simultaneously and in competition at the same active site. Although the small subunit is not catalytic it is essential for maximal activity. The sequence is that of Ribulose bisphosphate carboxylase small subunit, chloroplastic from Pinus thunbergii (Japanese black pine).